Consider the following 630-residue polypeptide: Biosynthetic arginine decarboxylase (630 aa).

Lys99 is modified (N6-(pyridoxal phosphate)lysine). 279–289 lines the substrate pocket; the sequence is FDVGGGLGVDY.

Belongs to the Orn/Lys/Arg decarboxylase class-II family. SpeA subfamily. Requires Mg(2+) as cofactor. It depends on pyridoxal 5'-phosphate as a cofactor.

It carries out the reaction L-arginine + H(+) = agmatine + CO2. It participates in amine and polyamine biosynthesis; agmatine biosynthesis; agmatine from L-arginine: step 1/1. Functionally, catalyzes the biosynthesis of agmatine from arginine. In Neisseria meningitidis serogroup B (strain ATCC BAA-335 / MC58), this protein is Biosynthetic arginine decarboxylase.